A 232-amino-acid chain; its full sequence is Aspartate/glutamate leucyltransferase (232 aa).

It belongs to the R-transferase family. Bpt subfamily.

Its subcellular location is the cytoplasm. It carries out the reaction N-terminal L-glutamyl-[protein] + L-leucyl-tRNA(Leu) = N-terminal L-leucyl-L-glutamyl-[protein] + tRNA(Leu) + H(+). It catalyses the reaction N-terminal L-aspartyl-[protein] + L-leucyl-tRNA(Leu) = N-terminal L-leucyl-L-aspartyl-[protein] + tRNA(Leu) + H(+). Functionally, functions in the N-end rule pathway of protein degradation where it conjugates Leu from its aminoacyl-tRNA to the N-termini of proteins containing an N-terminal aspartate or glutamate. This chain is Aspartate/glutamate leucyltransferase, found in Vibrio vulnificus (strain YJ016).